The chain runs to 1251 residues: Immunoglobulin-like and fibronectin type III domain-containing protein 1 (1251 aa).

The Ig-like 1 domain maps to 29–119; sequence PDFEQKPVTS…GEAACSVRLT (91 aa). The tract at residues 61 to 81 is disordered; the sequence is RWQNSKGDLSDSSKYKISSSP. The stretch at 188 to 221 forms a coiled coil; the sequence is IVDYRGMLRRLQEMKKEQEDKMAQYINTISSLRH. Residues 309–398 form the Ig-like 2 domain; the sequence is PRVVVPLAET…SSAWLVVEAG (90 aa). A compositionally biased stretch (basic and acidic residues) spans 403–433; sequence LQSTSADHKLQSRRSGKDGRLDIYGERRDAT. A disordered region spans residues 403–454; that stretch reads LQSTSADHKLQSRRSGKDGRLDIYGERRDATRSSTSRYKPGTGSFSKDAQGP. Residues 434–449 are compositionally biased toward polar residues; sequence RSSTSRYKPGTGSFSK. The region spanning 454 to 539 is the Ig-like 3 domain; the sequence is PMGHFSQGLA…GDQQSEATLT (86 aa). Fibronectin type-III domains lie at 646-741, 746-845, and 847-942; these read PPQG…VAPE, APSA…MRPP, and LVRN…AMPV. The 85-residue stretch at 946-1030 folds into the Ig-like 4 domain; the sequence is PKFLVDSSTK…LRTLQGKEVA (85 aa). The Fibronectin type-III 4 domain occupies 1043–1137; that stretch reads APGPIHLQEN…TSQPWCIPRQ (95 aa). An Ig-like 5 domain is found at 1151-1245; it reads PDLSQKPRFL…GQAVSTATLI (95 aa).

In terms of assembly, interacts with FLNC. Interacts with KY. In terms of tissue distribution, expressed in skeletal muscle.

Its subcellular location is the nucleus. It is found in the cytoplasm. The protein resides in the myofibril. It localises to the sarcomere. The protein localises to the z line. This is Immunoglobulin-like and fibronectin type III domain-containing protein 1 (IGFN1) from Homo sapiens (Human).